The primary structure comprises 262 residues: NAD-dependent protein deacylase (262 aa).

A Deacetylase sirtuin-type domain is found at 1 to 262; sequence MSNLRRAAEA…AALSPPGVPT (262 aa). 22–42 serves as a coordination point for NAD(+); it reads GAGISADSGIPTFRDKLTGLW. Substrate-binding residues include Tyr67 and Arg70. 101-104 provides a ligand contact to NAD(+); sequence QNID. His119 acts as the Proton acceptor in catalysis. 4 residues coordinate Zn(2+): Cys127, Cys130, Cys155, and Cys158. NAD(+) is bound by residues 195–197, 221–223, and Ala239; these read GTS and NLE.

It belongs to the sirtuin family. Class III subfamily. It depends on Zn(2+) as a cofactor.

The protein localises to the cytoplasm. It catalyses the reaction N(6)-acetyl-L-lysyl-[protein] + NAD(+) + H2O = 2''-O-acetyl-ADP-D-ribose + nicotinamide + L-lysyl-[protein]. It carries out the reaction N(6)-succinyl-L-lysyl-[protein] + NAD(+) + H2O = 2''-O-succinyl-ADP-D-ribose + nicotinamide + L-lysyl-[protein]. In terms of biological role, NAD-dependent lysine deacetylase and desuccinylase that specifically removes acetyl and succinyl groups on target proteins. Modulates the activities of several proteins which are inactive in their acylated form. The polypeptide is NAD-dependent protein deacylase (Pseudomonas putida (strain ATCC 47054 / DSM 6125 / CFBP 8728 / NCIMB 11950 / KT2440)).